A 338-amino-acid polypeptide reads, in one-letter code: Fructose-1,6-bisphosphatase class 1 (338 aa).

Glu-92, Asp-113, Leu-115, and Asp-116 together coordinate Mg(2+). Substrate is bound by residues 116–119 (DGSS), Asn-208, and Lys-274. A Mg(2+)-binding site is contributed by Glu-280.

It belongs to the FBPase class 1 family. In terms of assembly, homotetramer. Mg(2+) is required as a cofactor.

The protein resides in the cytoplasm. The enzyme catalyses beta-D-fructose 1,6-bisphosphate + H2O = beta-D-fructose 6-phosphate + phosphate. It participates in carbohydrate biosynthesis; gluconeogenesis. This chain is Fructose-1,6-bisphosphatase class 1, found in Paramagnetospirillum magneticum (strain ATCC 700264 / AMB-1) (Magnetospirillum magneticum).